A 359-amino-acid polypeptide reads, in one-letter code: Peptide chain release factor 1 (359 aa).

Q236 bears the N5-methylglutamine mark. The segment at 288 to 308 is disordered; the sequence is QDEQDAERKSTIGTGDRSERI. Over residues 293–308 the composition is skewed to basic and acidic residues; it reads AERKSTIGTGDRSERI.

Belongs to the prokaryotic/mitochondrial release factor family. Methylated by PrmC. Methylation increases the termination efficiency of RF1.

The protein resides in the cytoplasm. Peptide chain release factor 1 directs the termination of translation in response to the peptide chain termination codons UAG and UAA. The chain is Peptide chain release factor 1 from Streptococcus uberis (strain ATCC BAA-854 / 0140J).